Here is a 334-residue protein sequence, read N- to C-terminus: GTPase Obg (334 aa).

In terms of domain architecture, Obg spans 1-159; it reads MRFVDEVVIK…KEVRLELNLL (159 aa). One can recognise an OBG-type G domain in the interval 160–331; it reads ADVALLGLPN…LAKKLNEFLQ (172 aa). Residues 166 to 173, 191 to 195, 212 to 215, 282 to 285, and 312 to 314 contribute to the GTP site; these read GLPNAGKS, FTTMY, DIPG, NKID, and SAA. Mg(2+) is bound by residues S173 and T193.

Belongs to the TRAFAC class OBG-HflX-like GTPase superfamily. OBG GTPase family. Monomer. Mg(2+) serves as cofactor.

The protein resides in the cytoplasm. Its function is as follows. An essential GTPase which binds GTP, GDP and possibly (p)ppGpp with moderate affinity, with high nucleotide exchange rates and a fairly low GTP hydrolysis rate. Plays a role in control of the cell cycle, stress response, ribosome biogenesis and in those bacteria that undergo differentiation, in morphogenesis control. The sequence is that of GTPase Obg from Francisella tularensis subsp. mediasiatica (strain FSC147).